We begin with the raw amino-acid sequence, 425 residues long: 26S proteasome regulatory subunit 7 (425 aa).

208 to 215 (GPPGTGKT) contributes to the ATP binding site.

It belongs to the AAA ATPase family.

The protein resides in the cytoplasm. The protein localises to the nucleus. The 26S proteasome is involved in the ATP-dependent degradation of ubiquitinated proteins. The regulatory (or ATPase) complex confers ATP dependency and substrate specificity to the 26S complex. The protein is 26S proteasome regulatory subunit 7 (RPT1) of Prunus persica (Peach).